The primary structure comprises 466 residues: Glucose-6-phosphate 1-dehydrogenase 1 (466 aa).

NADP(+)-binding positions include Ser-48, 88 to 89 (DV), and Lys-141. The substrate site is built by His-171, Lys-175, Glu-209, and Asp-228. His-233 functions as the Proton acceptor in the catalytic mechanism. Substrate is bound by residues Lys-319 and Lys-324.

The protein belongs to the glucose-6-phosphate dehydrogenase family.

The enzyme catalyses D-glucose 6-phosphate + NADP(+) = 6-phospho-D-glucono-1,5-lactone + NADPH + H(+). It participates in carbohydrate degradation; pentose phosphate pathway; D-ribulose 5-phosphate from D-glucose 6-phosphate (oxidative stage): step 1/3. Its function is as follows. Catalyzes the oxidation of glucose 6-phosphate to 6-phosphogluconolactone. The protein is Glucose-6-phosphate 1-dehydrogenase 1 of Mycobacterium tuberculosis (strain CDC 1551 / Oshkosh).